A 362-amino-acid chain; its full sequence is P2Y purinoceptor 1 (362 aa).

Residues 1 to 40 are Extracellular-facing; the sequence is MTEALISAALNGTQPELLAGGWAAGNASTKCSLTKTGFQF. N-linked (GlcNAc...) asparagine glycosylation is found at Asn-11 and Asn-26. 2 cysteine pairs are disulfide-bonded: Cys-31/Cys-285 and Cys-113/Cys-191. Residue Lys-35 coordinates ADP. A helical membrane pass occupies residues 41 to 63; sequence YYLPTVYILVFITGFLGNSVAIW. Residues 64–76 are Cytoplasmic-facing; that stretch reads MFVFHMRPWSGIS. The helical transmembrane segment at 77–98 threads the bilayer; that stretch reads VYMFNLALADFLYVLTLPALIF. The Extracellular portion of the chain corresponds to 99–114; the sequence is YYFNKTDWIFGDVMCK. A glycan (N-linked (GlcNAc...) asparagine) is linked at Asn-102. The chain crosses the membrane as a helical span at residues 115 to 136; the sequence is LQRFIFHVNLYGSILFLTCISV. The Cytoplasmic portion of the chain corresponds to 137 to 155; it reads HRYTGVVHPLKSLGRLKKK. Residues 156-177 traverse the membrane as a helical segment; that stretch reads NAVYVSSLVWALVVAVIAPILF. Topologically, residues 178 to 203 are extracellular; the sequence is YSGTGVRRNKTITCYDTTADEYLRSY. The N-linked (GlcNAc...) asparagine glycan is linked to Asn-186. An ADP-binding site is contributed by 192-194; it reads YDT. Residues 204–226 traverse the membrane as a helical segment; sequence FVYSMCTTVFMFCIPFIVILGCY. Residues 227–249 are Cytoplasmic-facing; sequence GLIVKALIYKDLDNSPLRRKSIY. Residues 250 to 273 form a helical membrane-spanning segment; that stretch reads LVIIVLTVFAVSYLPFHVMKTLNL. ADP contacts are provided by residues 272–276, 292–295, and Arg-299; these read NLRAR and YATY. Residues 274–292 lie on the Extracellular side of the membrane; the sequence is RARLDFQTPQMCAFNDKVY. Residues 293 to 314 form a helical membrane-spanning segment; it reads ATYQVTRGLASLNSCVDPILYF. The Cytoplasmic segment spans residues 315 to 362; it reads LAGDTFRRRLSRATRKSSRRSEPNVQSKSEEMTLNILTEYKQNGDTSL.

This sequence belongs to the G-protein coupled receptor 1 family. In terms of tissue distribution, mainly found in blood, brain, and lung. To a lesser extent in stomach, gut and skeletal muscle.

It is found in the cell membrane. Functionally, receptor for extracellular adenine nucleotides such as ADP. In platelets, binding to ADP leads to mobilization of intracellular calcium ions via activation of phospholipase C, a change in platelet shape, and ultimately platelet aggregation. This Meleagris gallopavo (Wild turkey) protein is P2Y purinoceptor 1 (P2RY1).